A 527-amino-acid chain; its full sequence is Bifunctional purine biosynthesis protein PurH (527 aa).

The MGS-like domain maps to M1–T149.

This sequence belongs to the PurH family.

The catalysed reaction is (6R)-10-formyltetrahydrofolate + 5-amino-1-(5-phospho-beta-D-ribosyl)imidazole-4-carboxamide = 5-formamido-1-(5-phospho-D-ribosyl)imidazole-4-carboxamide + (6S)-5,6,7,8-tetrahydrofolate. The enzyme catalyses IMP + H2O = 5-formamido-1-(5-phospho-D-ribosyl)imidazole-4-carboxamide. It participates in purine metabolism; IMP biosynthesis via de novo pathway; 5-formamido-1-(5-phospho-D-ribosyl)imidazole-4-carboxamide from 5-amino-1-(5-phospho-D-ribosyl)imidazole-4-carboxamide (10-formyl THF route): step 1/1. Its pathway is purine metabolism; IMP biosynthesis via de novo pathway; IMP from 5-formamido-1-(5-phospho-D-ribosyl)imidazole-4-carboxamide: step 1/1. The polypeptide is Bifunctional purine biosynthesis protein PurH (Xylella fastidiosa (strain 9a5c)).